We begin with the raw amino-acid sequence, 344 residues long: MPIKIPSGLPARDILDSERIFALEKPEAERQRVRPLKLVILNLMPKKIETETQLLRLISKSPLQVEVDFMKTSTHEATHVSADHLVKFYETLDAFKDNYYDGLVVTGAPVEHLDFEQVDYWDEFKQILDWASTHVFSTMYLCWGAMGALNYRYGVRKELLPEKLFGVFPQYLQDEYCFLTNGFDEICLQPHSRLAGVNEGDIAHNPELQVLTWGPKSGPGLIATRDFSEVFALGHWEYGKYTLAEEYERDMKKGMTNVPFPENYFPHDDPKLEPLFAWRAHANLLWRNWLNWVYQTTPYDLSEVPQLREEKRLGTDRSIRHEPGSPRVDAFTPFSHDGYGVIRG.

Cysteine 142 serves as the catalytic Acyl-thioester intermediate. Lysine 163 and serine 192 together coordinate substrate. Histidine 235 serves as the catalytic Proton acceptor. Glutamate 237 is a catalytic residue. Residue arginine 249 participates in substrate binding.

This sequence belongs to the MetA family.

The protein localises to the cytoplasm. The enzyme catalyses L-homoserine + acetyl-CoA = O-acetyl-L-homoserine + CoA. It functions in the pathway amino-acid biosynthesis; L-methionine biosynthesis via de novo pathway; O-acetyl-L-homoserine from L-homoserine: step 1/1. Its function is as follows. Transfers an acetyl group from acetyl-CoA to L-homoserine, forming acetyl-L-homoserine. The chain is Homoserine O-acetyltransferase from Bifidobacterium adolescentis (strain ATCC 15703 / DSM 20083 / NCTC 11814 / E194a).